We begin with the raw amino-acid sequence, 363 residues long: Cytoskeleton protein RodZ (363 aa).

Over 1 to 111 (MNTEASQDQT…LGKKHKKRDG (111 aa)) the chain is Cytoplasmic. The region spanning 19-79 (LRQARESLGL…KLVHLPEDEL (61 aa)) is the HTH cro/C1-type domain. The H-T-H motif DNA-binding region spans 30 to 49 (QQTVAERLCLKVSTIRDIEE). A helical; Signal-anchor for type II membrane protein membrane pass occupies residues 112 to 132 (WLMSFTWLIVLVVLGLTGAWW). The Periplasmic portion of the chain corresponds to 133–363 (WQNHQAQQAE…RVARLTVGVE (231 aa)). Positions 151–277 (SAQLSQNGGQ…PLPTADAGVS (127 aa)) are disordered. Polar residues predominate over residues 188–199 (PLTNHSVSAITN). Residues 200–225 (SAPTTSSVPTTSSATTSSVPTTSSVP) show a composition bias toward low complexity. Residues 226–243 (KINSTEPVDTANTNTTMH) are compositionally biased toward polar residues. The span at 247–259 (AASAAVSPSQVPQ) shows a compositional bias: low complexity.

It belongs to the RodZ family.

It is found in the cell inner membrane. In terms of biological role, cytoskeletal protein that is involved in cell-shape control through regulation of the length of the long axis. This chain is Cytoskeleton protein RodZ, found in Yersinia pseudotuberculosis serotype O:1b (strain IP 31758).